Reading from the N-terminus, the 302-residue chain is UDP-N-acetylenolpyruvoylglucosamine reductase (302 aa).

The region spanning I30–G196 is the FAD-binding PCMH-type domain. The active site involves R174. Catalysis depends on S225, which acts as the Proton donor. Residue E295 is part of the active site.

It belongs to the MurB family. FAD serves as cofactor.

The protein localises to the cytoplasm. The catalysed reaction is UDP-N-acetyl-alpha-D-muramate + NADP(+) = UDP-N-acetyl-3-O-(1-carboxyvinyl)-alpha-D-glucosamine + NADPH + H(+). Its pathway is cell wall biogenesis; peptidoglycan biosynthesis. Its function is as follows. Cell wall formation. This Anoxybacillus flavithermus (strain DSM 21510 / WK1) protein is UDP-N-acetylenolpyruvoylglucosamine reductase.